Consider the following 257-residue polypeptide: tRNA-cytidine(32) 2-sulfurtransferase (257 aa).

Residues 37–42 (SGGKDS) carry the PP-loop motif motif. [4Fe-4S] cluster-binding residues include cysteine 112, cysteine 115, and cysteine 202.

Belongs to the TtcA family. As to quaternary structure, homodimer. It depends on Mg(2+) as a cofactor. [4Fe-4S] cluster is required as a cofactor.

Its subcellular location is the cytoplasm. It catalyses the reaction cytidine(32) in tRNA + S-sulfanyl-L-cysteinyl-[cysteine desulfurase] + AH2 + ATP = 2-thiocytidine(32) in tRNA + L-cysteinyl-[cysteine desulfurase] + A + AMP + diphosphate + H(+). The protein operates within tRNA modification. In terms of biological role, catalyzes the ATP-dependent 2-thiolation of cytidine in position 32 of tRNA, to form 2-thiocytidine (s(2)C32). The sulfur atoms are provided by the cysteine/cysteine desulfurase (IscS) system. The chain is tRNA-cytidine(32) 2-sulfurtransferase from Geobacter metallireducens (strain ATCC 53774 / DSM 7210 / GS-15).